A 644-amino-acid polypeptide reads, in one-letter code: Phosphomethylpyrimidine synthase (644 aa).

Substrate-binding positions include N236, M265, Y294, H330, 350–352, 391–394, and E430; these read SRG and DGLR. H434 provides a ligand contact to Zn(2+). Y457 provides a ligand contact to substrate. A Zn(2+)-binding site is contributed by H498. Residues C578, C581, and C586 each contribute to the [4Fe-4S] cluster site. The interval 623–644 is disordered; the sequence is RQKSEEFKASGSELYHPAVEAE.

This sequence belongs to the ThiC family. In terms of assembly, homodimer. [4Fe-4S] cluster is required as a cofactor.

It catalyses the reaction 5-amino-1-(5-phospho-beta-D-ribosyl)imidazole + S-adenosyl-L-methionine = 4-amino-2-methyl-5-(phosphooxymethyl)pyrimidine + CO + 5'-deoxyadenosine + formate + L-methionine + 3 H(+). The protein operates within cofactor biosynthesis; thiamine diphosphate biosynthesis. Functionally, catalyzes the synthesis of the hydroxymethylpyrimidine phosphate (HMP-P) moiety of thiamine from aminoimidazole ribotide (AIR) in a radical S-adenosyl-L-methionine (SAM)-dependent reaction. The chain is Phosphomethylpyrimidine synthase from Aliivibrio fischeri (strain MJ11) (Vibrio fischeri).